The primary structure comprises 378 residues: MKILVDENMPYARELFSRLGEVKAVPGRPIPVAELDDADALMVRSVTKVNEALLGGKSIKFVGTATAGTDHVDEAWLKQAGVGFSAAPGCNAIAVVEYVFSALLMLAERDGFALSDRTVGIVGVGNVGARLQARLEALGIRTLLCDPPRADRGDEGDFRSLDELVQEADILTFHTPLYKEGPYKTLHLADEALIGRLKPGTILINACRGPVVDNTALLARLNAGQSLSVVLDVWEGEPDLNVALLEKIDIGTSHIAGYTLEGKARGTTQVFEAYSTFIGRAQKVALDTLLPAPEFGRITLHGPLDQPTLKRLAHLVYDVRRDDAPLRKVAGIPGEFDKLRKNYLERREWSSLYVMCDDASAATLLHKLGFNAVHHPAH.

Substrate-binding residues include serine 45 and threonine 66. NAD(+)-binding residues include aspartate 146 and threonine 175. Arginine 208 is an active-site residue. Residue aspartate 232 coordinates NAD(+). Glutamate 237 is a catalytic residue. Histidine 254 acts as the Proton donor in catalysis. NAD(+) is bound at residue glycine 257. A substrate-binding site is contributed by tyrosine 258.

Belongs to the D-isomer specific 2-hydroxyacid dehydrogenase family. PdxB subfamily. As to quaternary structure, homodimer.

Its subcellular location is the cytoplasm. The enzyme catalyses 4-phospho-D-erythronate + NAD(+) = (R)-3-hydroxy-2-oxo-4-phosphooxybutanoate + NADH + H(+). Its pathway is cofactor biosynthesis; pyridoxine 5'-phosphate biosynthesis; pyridoxine 5'-phosphate from D-erythrose 4-phosphate: step 2/5. Its function is as follows. Catalyzes the oxidation of erythronate-4-phosphate to 3-hydroxy-2-oxo-4-phosphonooxybutanoate. The protein is Erythronate-4-phosphate dehydrogenase of Citrobacter koseri (strain ATCC BAA-895 / CDC 4225-83 / SGSC4696).